A 321-amino-acid polypeptide reads, in one-letter code: Probable DNA polymerase III subunit delta (321 aa).

It belongs to the DNA polymerase HolA subunit family. Component of the DNA clamp loading complex consisting of tau(3):delta(1):delta'(1). The DNA polymerase III holoenzyme complex contains at least 10 different subunits organized into 3 functionally essential subassemblies: the Pol III core, the beta sliding clamp processivity factor and the clamp-loading complex. The Pol III core (subunits alpha, epsilon and theta) contains the polymerase and the 3'-5' exonuclease proofreading activities. The polymerase is tethered to the template via the dimeric beta sliding clamp processivity factor. The DNA clamp-loading complex assembles the beta sliding clamp onto the primed template and plays a central role in the organization and communication at the replication fork.

The enzyme catalyses DNA(n) + a 2'-deoxyribonucleoside 5'-triphosphate = DNA(n+1) + diphosphate. Part of the beta sliding clamp loading complex, which hydrolyzes ATP to load the beta clamp onto primed DNA to form the DNA replication pre-initiation complex. DNA polymerase III is a complex, multichain enzyme responsible for most of the replicative synthesis in bacteria. This DNA polymerase also exhibits 3'-5' exonuclease activity. The delta subunit is the wrench that will open the beta subunit dimer. The DNA clamp loading complex (tau(3),delta,delta') is thought to load beta dimers onto DNA by binding ATP which alters the complex's conformation so it can bind beta sliding clamp dimers and open them at one interface. Primed DNA is recognized, ATP is hydrolyzed releasing the clamp loading complex and closing the beta sliding clamp ring around the primed DNA. This is Probable DNA polymerase III subunit delta from Rickettsia prowazekii (strain Madrid E).